The sequence spans 141 residues: NADH dehydrogenase [ubiquinone] 1 alpha subcomplex subunit 11 (141 aa).

Alanine 2 carries the N-acetylalanine modification. Helical transmembrane passes span 21 to 43 (KAYITTALGGLCGLISSAYSITH) and 58 to 80 (RFTFTAAAIGAMFGLTTCVSAQV).

Belongs to the complex I NDUFA11 subunit family. In terms of assembly, complex I is composed of 45 different subunits.

It localises to the mitochondrion inner membrane. Its function is as follows. Accessory subunit of the mitochondrial membrane respiratory chain NADH dehydrogenase (Complex I), that is believed not to be involved in catalysis. Complex I functions in the transfer of electrons from NADH to the respiratory chain. The immediate electron acceptor for the enzyme is believed to be ubiquinone. The chain is NADH dehydrogenase [ubiquinone] 1 alpha subcomplex subunit 11 (Ndufa11) from Rattus norvegicus (Rat).